A 33-amino-acid chain; its full sequence is Brevinin-2E (33 aa).

Cysteines 27 and 33 form a disulfide.

The protein belongs to the frog skin active peptide (FSAP) family. Brevinin subfamily. In terms of tissue distribution, expressed by the skin glands.

Its subcellular location is the secreted. Its function is as follows. Shows antibacterial activity against representative Gram-negative and Gram-positive bacterial species, and hemolytic activity. In Pelophylax lessonae (Pool frog), this protein is Brevinin-2E.